We begin with the raw amino-acid sequence, 375 residues long: Ubl carboxyl-terminal hydrolase 18 (375 aa).

Residues 18–45 form a disordered region; the sequence is ESPQSPADLEEKKEEDSNMKREQPRERP. Over residues 26-45 the composition is skewed to basic and acidic residues; the sequence is LEEKKEEDSNMKREQPRERP. The 319-residue stretch at 55–373 folds into the USP domain; the sequence is VGLHNIGQTC…TAYLLVYMKM (319 aa). The Nucleophile role is filled by C64. Catalysis depends on H321, which acts as the Proton acceptor.

This sequence belongs to the peptidase C19 family. In terms of assembly, interacts with STAT2; the interaction is direct. Interacts with IFNAR2; indirectly via STAT2, it negatively regulates the assembly of the ternary interferon-IFNAR1-IFNAR2 complex and inhibits type I interferon signaling. Interacts with STING1. Interacts with USP20.

The catalysed reaction is Thiol-dependent hydrolysis of ester, thioester, amide, peptide and isopeptide bonds formed by the C-terminal Gly of ubiquitin (a 76-residue protein attached to proteins as an intracellular targeting signal).. Functionally, interferon-induced ISG15-specific protease that plays a crucial role for maintaining a proper balance of ISG15-conjugated proteins in cells. Regulates protein ISGylation by efficiently cleaving ISG15 conjugates linked via isopeptide bonds. Regulates T-cell activation and T-helper 17 (Th17) cell differentiation by deubiquitinating TAK1, likely to keep TAK1-TAB complexes in steady conditions. In turn, restricts activation of NF-kappa-B, NFAT, and JNK as well as expression of IL2 in T-cells after TCR activation. Acts as a molecular adapter with USP20 to promote innate antiviral response through deubiquitinating STING1. Involved also in the negative regulation of the inflammatory response triggered by type I interferon. Upon recruitment by STAT2 to the type I interferon receptor subunit IFNAR2 interferes with the assembly of the ternary interferon-IFNAR1-IFNAR2 complex and acts as a negative regulator of the type I interferon signaling pathway. This Pongo abelii (Sumatran orangutan) protein is Ubl carboxyl-terminal hydrolase 18 (USP18).